The sequence spans 406 residues: 26S proteasome regulatory subunit 8 (406 aa).

At Ala-2 the chain carries N-acetylalanine. Ser-120 is modified (phosphoserine). The segment at 186-406 is may mediate interaction with PRPF9; that stretch reads VLLYGPPGTG…KNMSIKKLWK (221 aa). 190 to 197 provides a ligand contact to ATP; it reads GPPGTGKT. N6-acetyllysine is present on Lys-222.

Belongs to the AAA ATPase family. Component of the 19S proteasome regulatory particle complex. The 26S proteasome consists of a 20S core particle (CP) and two 19S regulatory subunits (RP). The regulatory particle is made of a lid composed of 9 subunits, a base containing 6 ATPases including PSMC5 and few additional components. Component of a complex with USP49 and RUVBL1. Interacts with PRPF19. Interacts with TRIM5. Interacts with NDC80. Interacts with PAAF1. Interacts, in vitro, with the thyroid hormone receptor (in a thyroid hormone T3-dependent manner) and with retinoid X receptor (RXR). Interacts with ERCC6.

Its subcellular location is the cytoplasm. It localises to the nucleus. Component of the 26S proteasome, a multiprotein complex involved in the ATP-dependent degradation of ubiquitinated proteins. This complex plays a key role in the maintenance of protein homeostasis by removing misfolded or damaged proteins, which could impair cellular functions, and by removing proteins whose functions are no longer required. Therefore, the proteasome participates in numerous cellular processes, including cell cycle progression, apoptosis, or DNA damage repair. PSMC5 belongs to the heterohexameric ring of AAA (ATPases associated with diverse cellular activities) proteins that unfolds ubiquitinated target proteins that are concurrently translocated into a proteolytic chamber and degraded into peptides. The polypeptide is 26S proteasome regulatory subunit 8 (PSMC5) (Bos taurus (Bovine)).